The primary structure comprises 602 residues: 4-hydroxy-3-methylbut-2-en-1-yl diphosphate synthase (flavodoxin) (602 aa).

Cys-508, Cys-511, Cys-543, and Glu-550 together coordinate [4Fe-4S] cluster.

The protein belongs to the IspG family. It depends on [4Fe-4S] cluster as a cofactor.

It catalyses the reaction (2E)-4-hydroxy-3-methylbut-2-enyl diphosphate + oxidized [flavodoxin] + H2O + 2 H(+) = 2-C-methyl-D-erythritol 2,4-cyclic diphosphate + reduced [flavodoxin]. It participates in isoprenoid biosynthesis; isopentenyl diphosphate biosynthesis via DXP pathway; isopentenyl diphosphate from 1-deoxy-D-xylulose 5-phosphate: step 5/6. In terms of biological role, converts 2C-methyl-D-erythritol 2,4-cyclodiphosphate (ME-2,4cPP) into 1-hydroxy-2-methyl-2-(E)-butenyl 4-diphosphate. The chain is 4-hydroxy-3-methylbut-2-en-1-yl diphosphate synthase (flavodoxin) from Chlamydia trachomatis serovar L2b (strain UCH-1/proctitis).